Reading from the N-terminus, the 474-residue chain is Proline--tRNA ligase (474 aa).

This sequence belongs to the class-II aminoacyl-tRNA synthetase family. ProS type 3 subfamily. Homodimer.

It localises to the cytoplasm. The catalysed reaction is tRNA(Pro) + L-proline + ATP = L-prolyl-tRNA(Pro) + AMP + diphosphate. Its function is as follows. Catalyzes the attachment of proline to tRNA(Pro) in a two-step reaction: proline is first activated by ATP to form Pro-AMP and then transferred to the acceptor end of tRNA(Pro). This is Proline--tRNA ligase from Mycoplasma capricolum subsp. capricolum (strain California kid / ATCC 27343 / NCTC 10154).